Consider the following 1009-residue polypeptide: DNA ligase 4 (1009 aa).

Disordered stretches follow at residues 1-34 and 51-72; these read METDQDMHDQAMAGEETDLDEKYPNRPQNKAPTL and KKKPVGPAGNRRKAGPHGLSAA. The span at 51–65 shows a compositional bias: basic residues; sequence KKKPVGPAGNRRKAG. Positions 315, 317, 318, 322, 384, 424, 484, 489, 506, and 508 each coordinate ATP. K317 (N6-AMP-lysine intermediate) is an active-site residue. Mg(2+) is bound at residue E384. E484 is a Mg(2+) binding site. 2 consecutive BRCT domains span residues 715-808 and 887-995; these read PSGH…PDLL and PCGW…QHMP.

Belongs to the ATP-dependent DNA ligase family. Mg(2+) serves as cofactor.

It localises to the nucleus. It carries out the reaction ATP + (deoxyribonucleotide)n-3'-hydroxyl + 5'-phospho-(deoxyribonucleotide)m = (deoxyribonucleotide)n+m + AMP + diphosphate.. In terms of biological role, DNA ligase involved in DNA non-homologous end joining (NHEJ); required for double-strand break (DSB) repair. This is DNA ligase 4 (lig4) from Emericella nidulans (strain FGSC A4 / ATCC 38163 / CBS 112.46 / NRRL 194 / M139) (Aspergillus nidulans).